Consider the following 1914-residue polypeptide: Autophagy-related protein 2 homolog A (1914 aa).

Residues 14–112 form the Chorein N-terminal domain; that stretch reads ERVCRYLLQH…LTLQPRQGSG (99 aa). 4 positions are modified to phosphoserine: S764, S869, S875, and S877. Residues 1222–1243 are disordered; it reads DLHPPPRPPSPTEIAGQKLSES. Phosphoserine occurs at positions 1246, 1282, and 1290. Residues 1299–1337 form a disordered region; the sequence is GERSGAQAPLPPPGASSHTLGSKAKEHENEEEGDGDTLD. The span at 1327 to 1337 shows a compositional bias: acidic residues; sequence NEEEGDGDTLD. Residues 1337 to 1383 form a WIPI-interacting region; that stretch reads DSDEFCILDAPGLGIAPRDGEPIVTQLHPGPIIVHDGHFSQPLGSTD. Position 1381 is a phosphoserine (S1381). Disordered stretches follow at residues 1427–1452, 1589–1634, and 1803–1822; these read LTGP…TQGG, MVPG…SSSD, and RSLQ…QPAD. Positions 1429–1446 are enriched in low complexity; the sequence is GPRVSPSRSSGPNRPQNS.

It belongs to the ATG2 family. In terms of assembly, interacts with ATG9A (via C-terminus). Interacts with TMEM41B. Interacts with VMP1.

The protein resides in the preautophagosomal structure membrane. The protein localises to the lipid droplet. It localises to the endoplasmic reticulum membrane. The enzyme catalyses a 1,2-diacyl-sn-glycero-3-phospho-L-serine(in) = a 1,2-diacyl-sn-glycero-3-phospho-L-serine(out). The catalysed reaction is a 1,2-diacyl-sn-glycero-3-phosphoethanolamine(in) = a 1,2-diacyl-sn-glycero-3-phosphoethanolamine(out). Lipid transfer protein involved in autophagosome assembly. Tethers the edge of the isolation membrane (IM) to the endoplasmic reticulum (ER) and mediates direct lipid transfer from ER to IM for IM expansion. Binds to the ER exit site (ERES), which is the membrane source for autophagosome formation, and extracts phospholipids from the membrane source and transfers them to ATG9 (ATG9A or ATG9B) to the IM for membrane expansion. Lipid transfer activity is enhanced by WIPI1 and WDR45/WIPI4, which promote ATG2A-association with phosphatidylinositol 3-monophosphate (PI3P)-containing membranes. Also regulates lipid droplets morphology and distribution within the cell. Functionally, (Microbial infection) Mediates the intracellular lifestyle of Cryptococcus neoformans by supporting infection. This is Autophagy-related protein 2 homolog A from Mus musculus (Mouse).